Reading from the N-terminus, the 504-residue chain is MESTEATMVERKAESPSSGDRARSIELAHQPTGAGASLSSFEVGGAKQGVNKAQDSAVNKGAANTPPRVAFGLSRYVVLVAYCLYCLLSGPSFMNWTTIADSLYKSGAFEWECKPGEIDTSVLPHEPKCPEQEVSVNHLFTVASCSYFVFAMLGGIMLDFAGPKFGALTGLACLITGWTLFGFSSESFRAYVPAMVFMGAGIDMAFFPCLCGANLFPGMVATIIAVYGSFRSISFIVGLSLRTIYINVEGATFRGVMLGYVGAGLGFCLLVALFIIPRRAWPAPDEAPSASAEQDVEAGADALAQKGEKNLTAIQSMKRDFLSLSFLPLFPYFVLVLITILFFAPSAKRLIPSAYEANQIISIFSFVPCIILGGIADRLGIVPVMMICNTCGLLSWILMLIPGIPCFAASQYIVSILISIQMSFLVSQVYCYVTEIFYPENLGKMIGFLCSVGGIISLVTDPMRKYSVDNGFYTMTVLCLIFALINEGLLLFMYVRKRKVPKVL.

The disordered stretch occupies residues 1-24 (MESTEATMVERKAESPSSGDRARS). Over residues 8–24 (MVERKAESPSSGDRARS) the composition is skewed to basic and acidic residues. The next 6 helical transmembrane spans lie at 76 to 96 (YVVLVAYCLYCLLSGPSFMNW), 138 to 158 (HLFTVASCSYFVFAMLGGIML), 165 to 185 (FGALTGLACLITGWTLFGFSS), 206 to 226 (FFPCLCGANLFPGMVATIIAV), 233 to 253 (ISFIVGLSLRTIYINVEGATF), and 256 to 276 (VMLGYVGAGLGFCLLVALFII). An N-linked (GlcNAc...) asparagine glycan is attached at asparagine 310. Transmembrane regions (helical) follow at residues 324 to 344 (LSFLPLFPYFVLVLITILFFA), 356 to 376 (EANQIISIFSFVPCIILGGIA), 381 to 401 (IVPVMMICNTCGLLSWILMLI), 406 to 426 (CFAASQYIVSILISIQMSFLV), 436 to 456 (IFYPENLGKMIGFLCSVGGII), and 475 to 495 (MTVLCLIFALINEGLLLFMYV).

This sequence belongs to the SLC43A transporter (TC 2.A.1.44) family.

The protein localises to the cell membrane. The catalysed reaction is L-tyrosine(in) = L-tyrosine(out). L-tyrosine uptake is stimulated in trans by aromatic and large neutral amino acids, but not smaller or charged amino acids. Functionally, L-tyrosine transporter that is essential for parasite survival and virulence. May also act as an aromatic and large neutral amino acid transporter. Does not cotransport other charged ions. Involved in amino acid homeostasis by facilitating the net uptake of L-tyrosine and maintaining intracellular pools of aromatic and large neutral amino acids through exchange. This is Aromatic and large neutral amino acid transporter 5-3 from Toxoplasma gondii.